Here is a 293-residue protein sequence, read N- to C-terminus: Methoxy mycolic acid synthase MmaA3 (293 aa).

Residues 39–40, 78–80, 100–105, 129–130, and I142 contribute to the S-adenosyl-L-methionine site; these read YS, GCG, TLSKNQ, and WA. Residue C275 is part of the active site.

Belongs to the CFA/CMAS family.

It participates in lipid metabolism; mycolic acid biosynthesis. Its function is as follows. Involved in the biosynthesis of methoxymycolic acid. It catalyzes the O-methylation of the hydroxy group of the hydroxymycolate to form a methyl ether. The chain is Methoxy mycolic acid synthase MmaA3 (cmaB) from Mycobacterium bovis (strain ATCC BAA-935 / AF2122/97).